The chain runs to 367 residues: Apolipoprotein A-V (367 aa).

An N-terminal signal peptide occupies residues 1-20 (MVAVLTWALALLSAFATAQT). A Phosphoserine modification is found at Ser-56.

This sequence belongs to the apolipoprotein A1/A4/E family. In terms of assembly, interacts with GPIHBP1. Interacts with SORL1; this interaction leads to APOA5 internalization and sorting either to lysosomes and degradation, or to the trans-Golgi network. In terms of processing, phosphorylated by FAM20C in the extracellular medium.

It localises to the secreted. The protein localises to the early endosome. The protein resides in the late endosome. It is found in the golgi apparatus. Its subcellular location is the trans-Golgi network. Its function is as follows. Minor apolipoprotein mainly associated with HDL and to a lesser extent with VLDL. May also be associated with chylomicrons. Important determinant of plasma triglyceride (TG) levels by both being a potent stimulator of apo-CII lipoprotein lipase (LPL) TG hydrolysis and an inhibitor of the hepatic VLDL-TG production rate (without affecting the VLDL-apoB production rate). Activates poorly lecithin:cholesterol acyltransferase (LCAT) and does not enhance efflux of cholesterol from macrophages. Binds heparin. The protein is Apolipoprotein A-V (APOA5) of Phoca vitulina (Harbor seal).